Consider the following 314-residue polypeptide: Ribosomal protein uL3 glutamine methyltransferase (314 aa).

The protein belongs to the protein N5-glutamine methyltransferase family. PrmB subfamily.

It catalyses the reaction L-glutaminyl-[ribosomal protein uL3] + S-adenosyl-L-methionine = N(5)-methyl-L-glutaminyl-[ribosomal protein uL3] + S-adenosyl-L-homocysteine + H(+). Functionally, methylates large ribosomal subunit protein uL3 on a specific glutamine residue. The chain is Ribosomal protein uL3 glutamine methyltransferase from Francisella tularensis subsp. tularensis (strain SCHU S4 / Schu 4).